The sequence spans 211 residues: Pyridoxine/pyridoxamine 5'-phosphate oxidase (211 aa).

Residues 7–10 and Lys-65 each bind substrate; that span reads RTDY. Residues 60–65, 75–76, Arg-81, and Lys-82 contribute to the FMN site; these read RILLIK and FT. Tyr-122, Arg-126, and Ser-130 together coordinate substrate. FMN is bound by residues 139-140 and Trp-183; that span reads QS. 189-191 lines the substrate pocket; sequence RLH. Arg-193 serves as a coordination point for FMN.

It belongs to the pyridoxamine 5'-phosphate oxidase family. As to quaternary structure, homodimer. FMN is required as a cofactor.

The catalysed reaction is pyridoxamine 5'-phosphate + O2 + H2O = pyridoxal 5'-phosphate + H2O2 + NH4(+). It catalyses the reaction pyridoxine 5'-phosphate + O2 = pyridoxal 5'-phosphate + H2O2. The protein operates within cofactor metabolism; pyridoxal 5'-phosphate salvage; pyridoxal 5'-phosphate from pyridoxamine 5'-phosphate: step 1/1. Its pathway is cofactor metabolism; pyridoxal 5'-phosphate salvage; pyridoxal 5'-phosphate from pyridoxine 5'-phosphate: step 1/1. Its function is as follows. Catalyzes the oxidation of either pyridoxine 5'-phosphate (PNP) or pyridoxamine 5'-phosphate (PMP) into pyridoxal 5'-phosphate (PLP). The protein is Pyridoxine/pyridoxamine 5'-phosphate oxidase of Janthinobacterium sp. (strain Marseille) (Minibacterium massiliensis).